The chain runs to 141 residues: VLSPADKTNLKAAWHKLGGHGGEYGAEALERMFATFPTTKTYFPHFDLSHGSAQVQGHGEKVADALLHAVGNLDDLPGALSALSDLHAHKLRVDPVNFKLLSHCLLVTLAAHHPAEFTPAVHASLDKFLATVSTVLTSKYR.

In terms of domain architecture, Globin spans 1–141 (VLSPADKTNL…VSTVLTSKYR (141 aa)). Ser-3 is subject to Phosphoserine. The residue at position 7 (Lys-7) is an N6-succinyllysine. Residue Thr-8 is modified to Phosphothreonine. Lys-11 is modified (N6-succinyllysine). N6-acetyllysine; alternate is present on Lys-16. Lys-16 bears the N6-succinyllysine; alternate mark. Tyr-24 bears the Phosphotyrosine mark. Residue Lys-40 is modified to N6-succinyllysine. The residue at position 49 (Ser-49) is a Phosphoserine. His-58 contacts O2. His-87 is a binding site for heme b. Ser-102 carries the phosphoserine modification. Phosphothreonine is present on Thr-108. Ser-124 is modified (phosphoserine). A phosphothreonine mark is found at Thr-134 and Thr-137. Ser-138 carries the phosphoserine modification.

The protein belongs to the globin family. Heterotetramer of two alpha chains and two beta chains. Red blood cells.

Its function is as follows. Involved in oxygen transport from the lung to the various peripheral tissues. The chain is Hemoglobin subunit alpha from Tamias striatus (Eastern chipmunk).